The sequence spans 32 residues: uncharacterized protein (32 aa).

This is an uncharacterized protein from Ornithodoros (relapsing fever ticks).